The following is a 165-amino-acid chain: Large ribosomal subunit protein uL10 (165 aa).

Belongs to the universal ribosomal protein uL10 family. In terms of assembly, part of the ribosomal stalk of the 50S ribosomal subunit. The N-terminus interacts with L11 and the large rRNA to form the base of the stalk. The C-terminus forms an elongated spine to which L12 dimers bind in a sequential fashion forming a multimeric L10(L12)X complex.

Forms part of the ribosomal stalk, playing a central role in the interaction of the ribosome with GTP-bound translation factors. This chain is Large ribosomal subunit protein uL10, found in Hamiltonella defensa subsp. Acyrthosiphon pisum (strain 5AT).